Consider the following 438-residue polypeptide: Innexin inx7 (438 aa).

Residues 1–23 (MLNTFSSVRQYLKFDLTRVVIDN) are Cytoplasmic-facing. The helical transmembrane segment at 24-44 (IVFKLHYRWTFVILLVATLLI) threads the bilayer. Over 45–58 (TSRQYIGEHIQCLS) the chain is Extracellular. Residues 59–79 (DGVVSPVINTFCFFTPTFTVV) form a helical membrane-spanning segment. At 80–112 (RDQNQTAYRPGSEPPGIGAFDPEKDTIKRHAYY) the chain is on the cytoplasmic side. A helical membrane pass occupies residues 113–133 (QWVPFVLFFQALCFYIPHALW). Residues 134–283 (KSWEGGRIKA…VMALNIMNEK (150 aa)) are Extracellular-facing. Residues 284 to 304 (IYIILWFWYAFLLIVTVLGLL) traverse the membrane as a helical segment. At 305-438 (WRILTLCFYR…STSDMAKLPV (134 aa)) the chain is on the cytoplasmic side. 2 disordered regions span residues 381-402 (NDVNAYREAPPTPAKNRYPELS) and 415-438 (RRNGSPSAGGAQGPSTSDMAKLPV). Low complexity predominate over residues 418-431 (GSPSAGGAQGPSTS).

Belongs to the pannexin family. As to expression, expressed around gut lobes in embryonic stages 15-17.

The protein localises to the cell membrane. It is found in the cell junction. Its subcellular location is the gap junction. Its function is as follows. Structural components of the gap junctions. This chain is Innexin inx7 (Inx7), found in Drosophila melanogaster (Fruit fly).